Reading from the N-terminus, the 192-residue chain is MITISESAQAHFRKLLEKQAENTNIRVFVMNPGTPNAECGVSYCPPDAVEPEDSRQPFDGFDAIIDPNSAPFLEEAAIDFISDQMGSQLTLKAPNAKMRKVDDNASLAERVEYVLQSQVNPSLAAHGGRVTLTEITDDGVAILQFGGGCNGCSMVDVTLKEGIEKQLLELFPGELTGAKDATEHARGEHSFY.

The [4Fe-4S] cluster site is built by C149 and C152.

Belongs to the NfuA family. Homodimer. [4Fe-4S] cluster is required as a cofactor.

Its function is as follows. Involved in iron-sulfur cluster biogenesis. Binds a 4Fe-4S cluster, can transfer this cluster to apoproteins, and thereby intervenes in the maturation of Fe/S proteins. Could also act as a scaffold/chaperone for damaged Fe/S proteins. The polypeptide is Fe/S biogenesis protein NfuA (Tolumonas auensis (strain DSM 9187 / NBRC 110442 / TA 4)).